Here is a 454-residue protein sequence, read N- to C-terminus: Anthocyanidin 3-O-galactosyltransferase 3GT6 (454 aa).

The N-terminal stretch at 1 to 21 (MTNSSKGRHVAVLPFPFSTHA) is a signal peptide. An anthocyanidin-binding residues include Ser-18 and His-20. Catalysis depends on His-20, which acts as the Proton acceptor. Asp-117 serves as the catalytic Charge relay. His-148 serves as a coordination point for an anthocyanidin. The UDP-alpha-D-glucose site is built by Ala-331, Gln-333, His-348, Trp-351, Asn-352, Ser-353, and Glu-356. An anthocyanidin is bound at residue Gly-371. Asp-372 contacts UDP-alpha-D-glucose. Asn-441 carries an N-linked (GlcNAc...) asparagine glycan.

It belongs to the UDP-glycosyltransferase family. In terms of assembly, monomer. As to expression, mostly expressed in leaves and flowers and, to a lower extent, in roots. In flowers, mainly observed in petals, stamens and scapes, and at lower levels in pistils and toruses.

The enzyme catalyses cyanidin + UDP-alpha-D-galactose = cyanidin 3-O-beta-D-galactoside + UDP + H(+). The catalysed reaction is cyanidin + UDP-alpha-D-glucose = cyanidin 3-O-beta-D-glucoside + UDP + H(+). It catalyses the reaction delphinidin + UDP-alpha-D-glucose = delphinidin 3-O-beta-D-glucoside + UDP. It carries out the reaction peonidin + UDP-alpha-D-glucose = peonidin 3-O-beta-D-glucoside + UDP. The enzyme catalyses pelargonidin + UDP-alpha-D-glucose = pelargonidin 3-O-beta-D-glucoside + UDP. The catalysed reaction is delphinidin + UDP-alpha-D-galactose = delphinidin 3-O-beta-D-galactoside + UDP + H(+). It catalyses the reaction pelargonidin + UDP-alpha-D-galactose = pelargonidin 3-O-beta-D-galactoside betaine + UDP. It carries out the reaction peonidin + UDP-alpha-D-galactose = peonidin 3-O-beta-D-galactoside + UDP. The enzyme catalyses petunidin + UDP-alpha-D-galactose = petunidin 3-O-beta-D-galactoside + UDP. The catalysed reaction is petunidin + UDP-alpha-D-glucose = petunidin 3-O-beta-D-glucoside + UDP. It catalyses the reaction an anthocyanidin + UDP-alpha-D-glucose + H(+) = an anthocyanidin 3-O-beta-D-glucoside + UDP. It carries out the reaction an anthocyanidin + UDP-alpha-D-galactose = an anthocyanidin 3-O-beta-D-galactoside + UDP. The protein operates within pigment biosynthesis; anthocyanin biosynthesis. Functionally, flavonoid 3-O-glycosyltransferase involved in the biosynthesis of anthocyanins conferring flower red/pink colors, mainly anthocyanidin 3-O-glycosides. Catalyzes the addition of UDP-sugar to the 3-OH of anthocyanidin, with a preference for UDP-galactose (UDP-Gal) as sugar donor and cyanidin as substrate; able to use delphinidin, pelargonidin, peonidin and petunidin as substrates in the presence of UDP-Gal, but barely active on malvidin. Can also use UDP-glucose (UDP-Glu) as sugar donor with cyanidin, delphinidin, pelargonidin, peonidin and petunidin as substrates, but not active on malvidin. The protein is Anthocyanidin 3-O-galactosyltransferase 3GT6 of Rhododendron delavayi (Rhododendron).